A 202-amino-acid chain; its full sequence is Cytochrome c oxidase assembly protein CtaG (202 aa).

Residues Met-1–Asn-14 are Cytoplasmic-facing. A helical; Signal-anchor for type II membrane protein membrane pass occupies residues Asn-15–Val-37. Over Pro-38–Leu-202 the chain is Periplasmic.

It belongs to the COX11/CtaG family.

Its subcellular location is the cell inner membrane. Its function is as follows. Exerts its effect at some terminal stage of cytochrome c oxidase synthesis, probably by being involved in the insertion of the copper B into subunit I. This Rhizobium etli (strain ATCC 51251 / DSM 11541 / JCM 21823 / NBRC 15573 / CFN 42) protein is Cytochrome c oxidase assembly protein CtaG.